The chain runs to 411 residues: Putative ion-transport protein YfeO (411 aa).

Helical transmembrane passes span 9–29 (MLLL…VLIA), 54–74 (DSPF…GLII), 99–119 (ALPG…SLGP), 149–169 (ILAS…AALI), 186–206 (LFAP…FFHP), 223–243 (IASG…AVWC), 258–278 (VLIL…GGPL), 296–316 (LGAG…VIAA), 322–342 (GGRI…LHAH), 343–363 (VEAV…VLVV), and 386–406 (LLCI…LLAA).

This sequence belongs to the chloride channel (TC 2.A.49) family.

It is found in the cell membrane. The sequence is that of Putative ion-transport protein YfeO from Salmonella paratyphi A (strain ATCC 9150 / SARB42).